The primary structure comprises 497 residues: Cysteine--tRNA ligase (497 aa).

Cysteine 32 is a binding site for Zn(2+). Positions 34 to 44 match the 'HIGH' region motif; that stretch reads PTVYGEGHLGH. Residues cysteine 228, histidine 253, and glutamate 257 each contribute to the Zn(2+) site. Residues 285 to 289 carry the 'KMSKS' region motif; it reads KMGKS. Lysine 288 provides a ligand contact to ATP.

It belongs to the class-I aminoacyl-tRNA synthetase family. In terms of assembly, monomer. Zn(2+) serves as cofactor.

It is found in the cytoplasm. The catalysed reaction is tRNA(Cys) + L-cysteine + ATP = L-cysteinyl-tRNA(Cys) + AMP + diphosphate. This is Cysteine--tRNA ligase from Cytophaga hutchinsonii (strain ATCC 33406 / DSM 1761 / CIP 103989 / NBRC 15051 / NCIMB 9469 / D465).